Here is a 359-residue protein sequence, read N- to C-terminus: DNA integrity scanning protein DisA (359 aa).

Positions 7 to 145 (DPTGRAVLRA…DGRRWVLEDS (139 aa)) constitute a DAC domain. ATP contacts are provided by residues Gly74, Leu92, and 105–109 (TRHRT).

The protein belongs to the DisA family. As to quaternary structure, homooctamer. Mg(2+) serves as cofactor.

It catalyses the reaction 2 ATP = 3',3'-c-di-AMP + 2 diphosphate. Its function is as follows. Participates in a DNA-damage check-point. DisA forms globular foci that rapidly scan along the chromosomes searching for lesions. Also has diadenylate cyclase activity, catalyzing the condensation of 2 ATP molecules into cyclic di-AMP (c-di-AMP). c-di-AMP likely acts as a signaling molecule that may couple DNA integrity with a cellular process. The chain is DNA integrity scanning protein DisA from Beutenbergia cavernae (strain ATCC BAA-8 / DSM 12333 / CCUG 43141 / JCM 11478 / NBRC 16432 / NCIMB 13614 / HKI 0122).